The following is a 324-amino-acid chain: Reaction center protein M chain (324 aa).

The Cytoplasmic segment spans residues 2–51; it reads ADYQTIYTQIQARGPHITVSGEWGDNDRVGKPFYSYWLGKIGDAQIGPIY. Residues 52-76 form a helical membrane-spanning segment; that stretch reads LGASGIAAFAFGSTAILIILFNMAA. At 77-110 the chain is on the periplasmic side; it reads EVHFDPLQFFRQFFWLGLYPPKAQYGMGIPPLHD. A helical transmembrane segment spans residues 111-137; it reads GGWWLMAGLFMTLSLGSWWIRVYSRAR. The Cytoplasmic segment spans residues 138 to 142; the sequence is ALGLG. Residues 143 to 166 form a helical membrane-spanning segment; it reads THIAWNFAAAIFFVLCIGCIHPTL. At 167–197 the chain is on the periplasmic side; the sequence is VGSWSEGVPFGIWPHIDWLTAFSIRYGNFYY. (7R,8Z)-bacteriochlorophyll b-binding residues include H181 and H201. Residues 198 to 223 traverse the membrane as a helical segment; that stretch reads CPWHGFSIGFAYGCGLLFAAHGATIL. Fe cation contacts are provided by H218 and E233. Residues 224-259 are Cytoplasmic-facing; that stretch reads AVARFGGDREIEQITDRGTAVERAALFWRWTIGFNA. Residue W251 coordinates a ubiquinone. A helical membrane pass occupies residues 260–284; the sequence is TIESVHRWGWFFSLMVMVSASVGIL. Position 265 (H265) interacts with Fe cation. Topologically, residues 285–324 are periplasmic; the sequence is LTGTFVDNWYLWCVKHGAAPDYPAYLPATPDPASLPGAPK.

This sequence belongs to the reaction center PufL/M/PsbA/D family. As to quaternary structure, reaction center is composed of four bacteriochlorophylls, two bacteriopheophytins, two ubiquinones, one iron, and three highly hydrophobic polypeptide chains (designated L, M, and H).

The protein resides in the cellular chromatophore membrane. The reaction center is a membrane-bound complex that mediates the initial photochemical event in the electron transfer process of photosynthesis. The chain is Reaction center protein M chain (pufM) from Blastochloris viridis (Rhodopseudomonas viridis).